We begin with the raw amino-acid sequence, 456 residues long: Chromosomal replication initiator protein DnaA (456 aa).

A domain I, interacts with DnaA modulators region spans residues 1-73; it reads MEIYLDNLWD…ADVVHDILGY (73 aa). Residues 73 to 117 form a domain II region; sequence YPVEIYLTTFLVEDSRKNDSGLIWSEHKSVNILGENLSIPKPLPA. The segment at 118-334 is domain III, AAA+ region; the sequence is NLNAKYMFSR…GALTRVVTYI (217 aa). 4 residues coordinate ATP: glycine 162, glycine 164, lysine 165, and threonine 166. The segment at 335–456 is domain IV, binds dsDNA; sequence SISGLPMTVE…SDRINFSSRH (122 aa).

It belongs to the DnaA family. As to quaternary structure, oligomerizes as a right-handed, spiral filament on DNA at oriC.

It is found in the cytoplasm. In terms of biological role, plays an essential role in the initiation and regulation of chromosomal replication. ATP-DnaA binds to the origin of replication (oriC) to initiate formation of the DNA replication initiation complex once per cell cycle. Binds the DnaA box (a 9 base pair repeat at the origin) and separates the double-stranded (ds)DNA. Forms a right-handed helical filament on oriC DNA; dsDNA binds to the exterior of the filament while single-stranded (ss)DNA is stabiized in the filament's interior. The ATP-DnaA-oriC complex binds and stabilizes one strand of the AT-rich DNA unwinding element (DUE), permitting loading of DNA polymerase. After initiation quickly degrades to an ADP-DnaA complex that is not apt for DNA replication. Binds acidic phospholipids. This is Chromosomal replication initiator protein DnaA from Trichodesmium erythraeum (strain IMS101).